Here is a 455-residue protein sequence, read N- to C-terminus: Zinc finger SWIM domain-containing protein 1 (455 aa).

Positions 264-288 (ASLSLAETPQDSHTPSEASAENPNT) are disordered. An SWIM-type zinc finger spans residues 333 to 375 (MSIQILEDTHTVQPQPPASCSCYFNQAFHLPCRHILAMLSARQ).

The polypeptide is Zinc finger SWIM domain-containing protein 1 (Zswim1) (Mus musculus (Mouse)).